We begin with the raw amino-acid sequence, 125 residues long: UPF0763 protein NAMH_0545 (125 aa).

Belongs to the UPF0763 family.

The sequence is that of UPF0763 protein NAMH_0545 from Nautilia profundicola (strain ATCC BAA-1463 / DSM 18972 / AmH).